Consider the following 234-residue polypeptide: Small ribosomal subunit protein uS2 (234 aa).

The protein belongs to the universal ribosomal protein uS2 family.

The polypeptide is Small ribosomal subunit protein uS2 (Prochlorococcus marinus subsp. pastoris (strain CCMP1986 / NIES-2087 / MED4)).